The following is a 135-amino-acid chain: Small ribosomal subunit protein bS6 (135 aa).

A disordered region spans residues Glu99–Glu135.

Belongs to the bacterial ribosomal protein bS6 family.

Functionally, binds together with bS18 to 16S ribosomal RNA. The protein is Small ribosomal subunit protein bS6 of Bartonella tribocorum (strain CIP 105476 / IBS 506).